A 739-amino-acid polypeptide reads, in one-letter code: Phosphoribosylformylglycinamidine synthase subunit PurL (739 aa).

Residue His-54 is part of the active site. 2 residues coordinate ATP: Tyr-57 and Lys-96. Residue Glu-98 participates in Mg(2+) binding. Substrate is bound by residues Ser-99–His-102 and Arg-121. The Proton acceptor role is filled by His-100. Asp-122 lines the Mg(2+) pocket. Gln-245 contributes to the substrate binding site. Asp-275 is a binding site for Mg(2+). Glu-319–Gln-321 serves as a coordination point for substrate. 2 residues coordinate ATP: Asp-504 and Gly-541. A Mg(2+)-binding site is contributed by Asn-542. Ser-544 is a substrate binding site.

Belongs to the FGAMS family. As to quaternary structure, monomer. Part of the FGAM synthase complex composed of 1 PurL, 1 PurQ and 2 PurS subunits.

It is found in the cytoplasm. It carries out the reaction N(2)-formyl-N(1)-(5-phospho-beta-D-ribosyl)glycinamide + L-glutamine + ATP + H2O = 2-formamido-N(1)-(5-O-phospho-beta-D-ribosyl)acetamidine + L-glutamate + ADP + phosphate + H(+). It functions in the pathway purine metabolism; IMP biosynthesis via de novo pathway; 5-amino-1-(5-phospho-D-ribosyl)imidazole from N(2)-formyl-N(1)-(5-phospho-D-ribosyl)glycinamide: step 1/2. Its function is as follows. Part of the phosphoribosylformylglycinamidine synthase complex involved in the purines biosynthetic pathway. Catalyzes the ATP-dependent conversion of formylglycinamide ribonucleotide (FGAR) and glutamine to yield formylglycinamidine ribonucleotide (FGAM) and glutamate. The FGAM synthase complex is composed of three subunits. PurQ produces an ammonia molecule by converting glutamine to glutamate. PurL transfers the ammonia molecule to FGAR to form FGAM in an ATP-dependent manner. PurS interacts with PurQ and PurL and is thought to assist in the transfer of the ammonia molecule from PurQ to PurL. This is Phosphoribosylformylglycinamidine synthase subunit PurL from Lactococcus lactis subsp. cremoris (strain SK11).